The following is a 306-amino-acid chain: Porphobilinogen deaminase (306 aa).

Residue C239 is modified to S-(dipyrrolylmethanemethyl)cysteine.

The protein belongs to the HMBS family. Monomer. It depends on dipyrromethane as a cofactor.

The enzyme catalyses 4 porphobilinogen + H2O = hydroxymethylbilane + 4 NH4(+). It participates in porphyrin-containing compound metabolism; protoporphyrin-IX biosynthesis; coproporphyrinogen-III from 5-aminolevulinate: step 2/4. Tetrapolymerization of the monopyrrole PBG into the hydroxymethylbilane pre-uroporphyrinogen in several discrete steps. This is Porphobilinogen deaminase from Helicobacter pylori (strain G27).